A 557-amino-acid polypeptide reads, in one-letter code: MKFSTVFTAIFALGTAVSAQQVVTPASDPLALELSQRNLDKLYELQERDLFSIVEGLFSSINYTSILDSIDYESIAGWTNNLLVENNNIEYLDNILNFLGDTDLVPFAVSYLLSNNETRNIVGEVVIEALPLIKDIDPTPIFVALKNSGLAYVLVADLIKNPNTVPFVKQVVVDLLDEGSFGLGDLFGGSSEATTTAVAIDSLATINTNIDLTVAAAPTTKAQSIGSIDTASLAVLFSEARTANGNGATKVANTVAVTAQVTAQVTNVGTTAKATKAVATGEINYSGITGPAYESLPPTQFGSVPTSINYSALSQISGALRKREYNDAVEAALRDIQKREEGIDDVEIALRKMKRDNIEDLLTTIFASVARSNLLNTTIQYLVTDQRFESTVVELLQGVFENIGSTLTGILDTDWSALQPLVSSLLNSGLLTDFISRAFNDDELKAVLWNDITSIFKRDMAFRDEIVKRSNGTITSLPVSDFITGVATETSALDGADGTLSSLDVTAFINTVSHSFITSNASSSAVITIQSDNAGSSYGPGFYSTIFAVFGLFAMMI.

The first 19 residues, 1 to 19 (MKFSTVFTAIFALGTAVSA), serve as a signal peptide directing secretion. Residues Asn-62, Asn-116, Asn-284, and Asn-309 are each glycosylated (N-linked (GlcNAc...) asparagine). A coiled-coil region spans residues 320–355 (LRKREYNDAVEAALRDIQKREEGIDDVEIALRKMKR). N-linked (GlcNAc...) asparagine glycans are attached at residues Asn-376, Asn-471, and Asn-520. Asn-533 carries GPI-anchor amidated asparagine lipidation. Positions 534 to 557 (AGSSYGPGFYSTIFAVFGLFAMMI) are cleaved as a propeptide — removed in mature form.

Substrate for cleavage by KEX2 in vitro.

Its subcellular location is the cell membrane. Its function is as follows. Predicted GPI-anchored protein which may have a role during host infection. This is Predicted GPI-anchored protein 17 (PGA17) from Candida albicans (strain SC5314 / ATCC MYA-2876) (Yeast).